We begin with the raw amino-acid sequence, 691 residues long: Elongation factor G (691 aa).

The tr-type G domain occupies 12–286 (KKLRNIGIMA…GILEYLPSPL (275 aa)). GTP contacts are provided by residues 21–28 (AHIDAGKT), 85–89 (DTPGH), and 139–142 (NKMD).

It belongs to the TRAFAC class translation factor GTPase superfamily. Classic translation factor GTPase family. EF-G/EF-2 subfamily.

The protein resides in the cytoplasm. Its function is as follows. Catalyzes the GTP-dependent ribosomal translocation step during translation elongation. During this step, the ribosome changes from the pre-translocational (PRE) to the post-translocational (POST) state as the newly formed A-site-bound peptidyl-tRNA and P-site-bound deacylated tRNA move to the P and E sites, respectively. Catalyzes the coordinated movement of the two tRNA molecules, the mRNA and conformational changes in the ribosome. This chain is Elongation factor G, found in Thermosipho africanus (strain TCF52B).